The sequence spans 292 residues: Zinc finger protein OZF (292 aa).

10 C2H2-type zinc fingers span residues 16 to 38, 44 to 66, 72 to 94, 100 to 122, 128 to 150, 156 to 178, 184 to 206, 212 to 234, 240 to 262, and 268 to 290; these read FACK…EHFH, FECN…QNTH, FECN…QKIH, FECK…QRTH, FVCK…EKIH, FKCS…QNIH, YECN…VRIH, YECN…VRSH, YGCN…LRIH, and YQCS…QKIH. Residues Lys28, Lys51, and Lys56 each participate in a glycyl lysine isopeptide (Lys-Gly) (interchain with G-Cter in SUMO2) cross-link. Residues Lys157 and Lys169 each participate in a glycyl lysine isopeptide (Lys-Gly) (interchain with G-Cter in SUMO) cross-link. Lys173 is covalently cross-linked (Glycyl lysine isopeptide (Lys-Gly) (interchain with G-Cter in SUMO2)). The tract at residues 212–292 is interaction with TERF2IP; that stretch reads YECNVCGKAF…HIRHQKIHTH (81 aa).

It belongs to the krueppel C2H2-type zinc-finger protein family. In terms of assembly, binds DNA. Interacts with SUMO conjugating enzyme UBC9/UBE2I. Interacts with the telomeric protein TERF2IP. In terms of processing, sumoylated. As to expression, liver, skeletal and heart muscle, mammary cells. Very low levels in brain, lung, placenta and kidney. Strongly overexpressed in many pancreas and colorectal cancers. Increased gene copy numbers are detected in 3 of 12 tumor cell lines and 2 of 12 primary pancreatic carcinomas. Overexpressed in 80% of colorectal cancers.

It is found in the nucleus. This chain is Zinc finger protein OZF (ZNF146), found in Homo sapiens (Human).